Reading from the N-terminus, the 227-residue chain is ATP synthase subunit delta (227 aa).

The protein belongs to the ATPase delta chain family. F-type ATPases have 2 components, F(1) - the catalytic core - and F(0) - the membrane proton channel. F(1) has five subunits: alpha(3), beta(3), gamma(1), delta(1), epsilon(1). F(0) has three main subunits: a(1), b(2) and c(10-14). The alpha and beta chains form an alternating ring which encloses part of the gamma chain. F(1) is attached to F(0) by a central stalk formed by the gamma and epsilon chains, while a peripheral stalk is formed by the delta and b chains.

It localises to the cell inner membrane. Functionally, f(1)F(0) ATP synthase produces ATP from ADP in the presence of a proton or sodium gradient. F-type ATPases consist of two structural domains, F(1) containing the extramembraneous catalytic core and F(0) containing the membrane proton channel, linked together by a central stalk and a peripheral stalk. During catalysis, ATP synthesis in the catalytic domain of F(1) is coupled via a rotary mechanism of the central stalk subunits to proton translocation. Its function is as follows. This protein is part of the stalk that links CF(0) to CF(1). It either transmits conformational changes from CF(0) to CF(1) or is implicated in proton conduction. In Rhodopirellula baltica (strain DSM 10527 / NCIMB 13988 / SH1), this protein is ATP synthase subunit delta.